A 501-amino-acid polypeptide reads, in one-letter code: Probable malate:quinone oxidoreductase (501 aa).

This sequence belongs to the MQO family. It depends on FAD as a cofactor.

It carries out the reaction (S)-malate + a quinone = a quinol + oxaloacetate. It functions in the pathway carbohydrate metabolism; tricarboxylic acid cycle; oxaloacetate from (S)-malate (quinone route): step 1/1. The polypeptide is Probable malate:quinone oxidoreductase (Paenarthrobacter aurescens (strain TC1)).